A 75-amino-acid polypeptide reads, in one-letter code: Small ribosomal subunit protein bS16c (75 aa).

Belongs to the bacterial ribosomal protein bS16 family.

It is found in the plastid. Its subcellular location is the chloroplast. This is Small ribosomal subunit protein bS16c from Cyanidioschyzon merolae (strain NIES-3377 / 10D) (Unicellular red alga).